We begin with the raw amino-acid sequence, 317 residues long: Beta-ketoacyl-[acyl-carrier-protein] synthase III (317 aa).

Catalysis depends on residues cysteine 112 and histidine 244. The tract at residues 245 to 249 (QANIR) is ACP-binding. The active site involves asparagine 274.

It belongs to the thiolase-like superfamily. FabH family. In terms of assembly, homodimer.

It is found in the cytoplasm. The catalysed reaction is malonyl-[ACP] + acetyl-CoA + H(+) = 3-oxobutanoyl-[ACP] + CO2 + CoA. It participates in lipid metabolism; fatty acid biosynthesis. Catalyzes the condensation reaction of fatty acid synthesis by the addition to an acyl acceptor of two carbons from malonyl-ACP. Catalyzes the first condensation reaction which initiates fatty acid synthesis and may therefore play a role in governing the total rate of fatty acid production. Possesses both acetoacetyl-ACP synthase and acetyl transacylase activities. Its substrate specificity determines the biosynthesis of branched-chain and/or straight-chain of fatty acids. The protein is Beta-ketoacyl-[acyl-carrier-protein] synthase III of Rickettsia typhi (strain ATCC VR-144 / Wilmington).